The primary structure comprises 198 residues: Holliday junction resolvase RecU (198 aa).

The tract at residues 1-21 is disordered; the sequence is MVNYPHKLSSQKRQPSLSQPK. The segment covering 11–21 has biased composition (polar residues); the sequence is QKRQPSLSQPK. Residues T81, D83, E96, and Q115 each contribute to the Mg(2+) site.

It belongs to the RecU family. Mg(2+) is required as a cofactor.

It is found in the cytoplasm. It carries out the reaction Endonucleolytic cleavage at a junction such as a reciprocal single-stranded crossover between two homologous DNA duplexes (Holliday junction).. Endonuclease that resolves Holliday junction intermediates in genetic recombination. Cleaves mobile four-strand junctions by introducing symmetrical nicks in paired strands. Promotes annealing of linear ssDNA with homologous dsDNA. Required for DNA repair, homologous recombination and chromosome segregation. In Streptococcus pneumoniae (strain ATCC 700669 / Spain 23F-1), this protein is Holliday junction resolvase RecU.